We begin with the raw amino-acid sequence, 965 residues long: Collagenase ColQ1 (965 aa).

The N-terminal stretch at 1-30 (MNKKSKINKVMLSISTMALSLGALQAPASA) is a signal peptide. A propeptide spanning residues 31 to 93 (EEKVPYNVLK…KAAVKQVKES (63 aa)) is cleaved from the precursor. Residues 94–366 (YSMADLNKMN…AVEQITTNYN (273 aa)) are activator domain. The S1 metalloprotease domain stretch occupies residues 94-765 (YSMADLNKMN…VFHGIAKDDG (672 aa)). The interval 376 to 645 (DLEKIRKEGK…MQQLIDNQDK (270 aa)) is catalytic subdomain. Zn(2+) is bound at residue histidine 501. Glutamate 502 is a catalytic residue. Zn(2+) contacts are provided by histidine 505 and glutamate 533. The interval 653 to 765 (DDYLAEHAPK…VFHGIAKDDG (113 aa)) is helper subdomain. Residues 769-850 (APTVNINGPY…ESKSETTVTV (82 aa)) enclose the PKD domain. The tract at residues 842 to 867 (SKSETTVTVKDGSLTESEPNNRPEEA) is disordered. Positions 845–859 (ETTVTVKDGSLTESE) are enriched in polar residues. The interval 853–965 (GSLTESEPNN…GDGTYKLSVK (113 aa)) is collagen-binding domain.

Belongs to the peptidase M9B family. Collagenase subfamily. Ca(2+) serves as cofactor. Requires Zn(2+) as cofactor.

The protein resides in the secreted. It carries out the reaction Digestion of native collagen in the triple helical region at Xaa-|-Gly bonds. With synthetic peptides, a preference is shown for Gly at P3 and P1', Pro and Ala at P2 and P2', and hydroxyproline, Ala or Arg at P3'.. Its activity is regulated as follows. Strongly inhibited by EDTA. Not inhibited by E-64 and PMSF, broad-spectrum cysteine and serine protease inhibitors. Acts as a true collagenase, which is highly active and cleaves natively folded collagen. In vitro, can also cleave gelatin and the synthetic peptide FALGPA (furylacryloyl-Leu-Gly-Pro-Ala). Causes damage on dermal collagen (COL), resulting in gaps in the tissue, which might lead to an accelerated bacterial infiltration and penetration into deeper sites of the host. The chain is Collagenase ColQ1 from Bacillus cereus (strain Q1).